Consider the following 212-residue polypeptide: RNA chaperone ProQ (212 aa).

Residues Arg114–Val149 form a disordered region. Over residues Ala118–Lys129 the composition is skewed to low complexity. Positions Lys130 to Lys141 are enriched in basic residues.

The protein belongs to the ProQ family.

It localises to the cytoplasm. Its function is as follows. RNA chaperone with significant RNA binding, RNA strand exchange and RNA duplexing activities. This is RNA chaperone ProQ from Shewanella piezotolerans (strain WP3 / JCM 13877).